The sequence spans 123 residues: Small ribosomal subunit protein uS12cz/uS12cy (123 aa).

The protein belongs to the universal ribosomal protein uS12 family. Part of the 30S ribosomal subunit.

The protein localises to the plastid. It localises to the chloroplast. Its function is as follows. With S4 and S5 plays an important role in translational accuracy. Located at the interface of the 30S and 50S subunits. This is Small ribosomal subunit protein uS12cz/uS12cy (rps12-A) from Arabis hirsuta (Hairy rock-cress).